The primary structure comprises 1923 residues: Callose synthase 5 (1923 aa).

Positions Met-1–Ser-10 are enriched in polar residues. The segment at Met-1–Ser-22 is disordered. At Met-1–His-481 the chain is on the cytoplasmic side. A helical transmembrane segment spans residues Ser-482 to Phe-502. Topologically, residues Glu-503–Ser-521 are extracellular. The helical transmembrane segment at Ile-522–Phe-542 threads the bilayer. At Pro-543–Lys-559 the chain is on the cytoplasmic side. Residues Ile-560 to Phe-580 form a helical membrane-spanning segment. At Ala-581–Leu-601 the chain is on the extracellular side. A helical membrane pass occupies residues Tyr-602–Phe-622. The Cytoplasmic segment spans residues Pro-623–Gln-658. Residues Ile-659–Ser-679 traverse the membrane as a helical segment. Topologically, residues Tyr-680–Val-719 are extracellular. The chain crosses the membrane as a helical span at residues Ser-720 to Phe-740. Residues Ser-741–Tyr-1486 lie on the Cytoplasmic side of the membrane. The helical transmembrane segment at Phe-1487–Leu-1507 threads the bilayer. Residues Tyr-1508–Lys-1535 are Extracellular-facing. Residues Ala-1536–Met-1556 traverse the membrane as a helical segment. At Glu-1557–Thr-1566 the chain is on the cytoplasmic side. The helical transmembrane segment at Ala-1567–Leu-1587 threads the bilayer. Residues Gly-1588–His-1630 are Extracellular-facing. The chain crosses the membrane as a helical span at residues Phe-1631–Ala-1651. The Cytoplasmic segment spans residues Glu-1652–Tyr-1657. The helical transmembrane segment at Ala-1658 to Phe-1678 threads the bilayer. Topologically, residues Asn-1679–Lys-1732 are extracellular. Asn-1710 carries N-linked (GlcNAc...) asparagine glycosylation. The chain crosses the membrane as a helical span at residues Phe-1733–Leu-1755. At Thr-1756–Ser-1766 the chain is on the cytoplasmic side. The helical transmembrane segment at Ile-1767–Val-1787 threads the bilayer. Residues Ser-1788–Arg-1803 lie on the Extracellular side of the membrane. A helical transmembrane segment spans residues Leu-1804–Leu-1824. A topological domain (cytoplasmic) is located at residue Lys-1825. A helical transmembrane segment spans residues Leu-1826–Leu-1846. The Extracellular portion of the chain corresponds to Gln-1847–Glu-1873. Residues Tyr-1874–Ser-1894 form a helical membrane-spanning segment. Residues Glu-1895–Lys-1923 lie on the Cytoplasmic side of the membrane.

It belongs to the glycosyltransferase 48 family.

Its subcellular location is the cell membrane. It carries out the reaction [(1-&gt;3)-beta-D-glucosyl](n) + UDP-alpha-D-glucose = [(1-&gt;3)-beta-D-glucosyl](n+1) + UDP + H(+). Functionally, required for the formation of the callose wall separating the tetraspores (interstitial wall) and surrounding the pollen mother cells (peripheral wall). Required for exine formation on pollen wall. May be involved in callose synthesis during pollen tube growth. During plant growth and development, callose is found as a transitory component of the cell plate in dividing cells, is a major component of pollen mother cell walls and pollen tubes, and is found as a structural component of plasmodesmatal canals. This chain is Callose synthase 5 (CALS5), found in Arabidopsis thaliana (Mouse-ear cress).